A 97-amino-acid chain; its full sequence is Small ribosomal subunit protein bS20 (97 aa).

Belongs to the bacterial ribosomal protein bS20 family.

Functionally, binds directly to 16S ribosomal RNA. This is Small ribosomal subunit protein bS20 from Gloeothece citriformis (strain PCC 7424) (Cyanothece sp. (strain PCC 7424)).